Here is a 260-residue protein sequence, read N- to C-terminus: Crotonyl-CoA hydratase (260 aa).

Catalysis depends on glutamate 114, which acts as the Nucleophile. Glutamate 134 functions as the Proton acceptor in the catalytic mechanism.

This sequence belongs to the enoyl-CoA hydratase/isomerase family. In terms of assembly, homotetramer.

Its subcellular location is the cytoplasm. The catalysed reaction is 3-hydroxybutanoyl-CoA = (2E)-butenoyl-CoA + H2O. The enzyme catalyses a short-chain (3S)-3-hydroxyacyl-CoA = a short-chain (2E)-enoyl-CoA + H2O. It functions in the pathway lipid metabolism; butanoate metabolism. Its function is as follows. Involved in syntrophic growth of S.wolfei with butyrate, as part of the butyrate oxidation pathway. Probably catalyzes the hydration of crotonyl-CoA to 3-hydroxybutyryl-CoA. The protein is Crotonyl-CoA hydratase of Syntrophomonas wolfei subsp. wolfei (strain DSM 2245B / Goettingen).